We begin with the raw amino-acid sequence, 129 residues long: uncharacterized protein (129 aa).

The segment at 1–129 (MWLWQDIQCC…HTSNGRTGDL (129 aa)) is disordered. The span at 87–100 (KGADTRRLPRETRP) shows a compositional bias: basic and acidic residues. Residues 119-129 (PHTSNGRTGDL) show a composition bias toward polar residues.

This is an uncharacterized protein from Homo sapiens (Human).